The sequence spans 604 residues: UvrABC system protein C (604 aa).

A GIY-YIG domain is found at 15–92 (DLPGCYLMKN…IQKHQPYFNI (78 aa)). Residues 197-232 (ETVKKQLTKRMDQAAADLEFERAAELRDQLNYIEMT) enclose the UVR domain.

The protein belongs to the UvrC family. As to quaternary structure, interacts with UvrB in an incision complex.

Its subcellular location is the cytoplasm. Functionally, the UvrABC repair system catalyzes the recognition and processing of DNA lesions. UvrC both incises the 5' and 3' sides of the lesion. The N-terminal half is responsible for the 3' incision and the C-terminal half is responsible for the 5' incision. In Lactiplantibacillus plantarum (strain ATCC BAA-793 / NCIMB 8826 / WCFS1) (Lactobacillus plantarum), this protein is UvrABC system protein C.